A 189-amino-acid polypeptide reads, in one-letter code: UPF0301 protein CTLon_0458 (189 aa).

Belongs to the UPF0301 (AlgH) family.

The polypeptide is UPF0301 protein CTLon_0458 (Chlamydia trachomatis serovar L2b (strain UCH-1/proctitis)).